The following is a 557-amino-acid chain: Potassium-transporting ATPase potassium-binding subunit (557 aa).

Helical transmembrane passes span 5 to 25 (GFLLIATFLLVLMVLARPLGS), 63 to 83 (LCAILGLNMLGLAVLFFMLLG), 132 to 152 (GLTVQNFLSAASGIAVIFALI), 170 to 190 (LLRITLWVLVPVALLIALFFI), 253 to 273 (FVQMLAIFLIPTALCFAFGEV), 283 to 303 (LLWAMSVIFVICVGVVMWAEV), 329 to 349 (VLVSSLFAVVTTAASCGAVIA), 356 to 376 (ALGGMVPMWLMQIGEVVFGGV), 379 to 399 (GLYGMMLFVLLAVFIAGLMIG), 416 to 436 (LTALAILVTPTLVLMGAALAM), 484 to 504 (LLAFCMFVGRFGVIIPVMAIA), and 526 to 546 (LFVGLLIGTVLLVGALTFIPA).

It belongs to the KdpA family. The system is composed of three essential subunits: KdpA, KdpB and KdpC.

The protein localises to the cell inner membrane. Part of the high-affinity ATP-driven potassium transport (or Kdp) system, which catalyzes the hydrolysis of ATP coupled with the electrogenic transport of potassium into the cytoplasm. This subunit binds the periplasmic potassium ions and delivers the ions to the membrane domain of KdpB through an intramembrane tunnel. The sequence is that of Potassium-transporting ATPase potassium-binding subunit from Escherichia coli (strain SE11).